A 557-amino-acid polypeptide reads, in one-letter code: Dihydroxy-acid dehydratase (557 aa).

C50 contributes to the [2Fe-2S] cluster binding site. D82 serves as a coordination point for Mg(2+). C123 provides a ligand contact to [2Fe-2S] cluster. Positions 124 and 125 each coordinate Mg(2+). At K125 the chain carries N6-carboxylysine. C195 serves as a coordination point for [2Fe-2S] cluster. E447 provides a ligand contact to Mg(2+). The active-site Proton acceptor is the S473.

This sequence belongs to the IlvD/Edd family. Homodimer. It depends on [2Fe-2S] cluster as a cofactor. Requires Mg(2+) as cofactor.

It carries out the reaction (2R)-2,3-dihydroxy-3-methylbutanoate = 3-methyl-2-oxobutanoate + H2O. The catalysed reaction is (2R,3R)-2,3-dihydroxy-3-methylpentanoate = (S)-3-methyl-2-oxopentanoate + H2O. It functions in the pathway amino-acid biosynthesis; L-isoleucine biosynthesis; L-isoleucine from 2-oxobutanoate: step 3/4. It participates in amino-acid biosynthesis; L-valine biosynthesis; L-valine from pyruvate: step 3/4. Functionally, functions in the biosynthesis of branched-chain amino acids. Catalyzes the dehydration of (2R,3R)-2,3-dihydroxy-3-methylpentanoate (2,3-dihydroxy-3-methylvalerate) into 2-oxo-3-methylpentanoate (2-oxo-3-methylvalerate) and of (2R)-2,3-dihydroxy-3-methylbutanoate (2,3-dihydroxyisovalerate) into 2-oxo-3-methylbutanoate (2-oxoisovalerate), the penultimate precursor to L-isoleucine and L-valine, respectively. The protein is Dihydroxy-acid dehydratase of Janthinobacterium sp. (strain Marseille) (Minibacterium massiliensis).